A 311-amino-acid chain; its full sequence is Oxygen-dependent coproporphyrinogen-III oxidase (311 aa).

Substrate is bound at residue Ser-100. A divalent metal cation is bound by residues His-104 and His-114. Residue His-114 is the Proton donor of the active site. A substrate-binding site is contributed by 116–118; the sequence is NVR. Residues His-153 and His-183 each contribute to the a divalent metal cation site. Residues 248–283 are important for dimerization; that stretch reads YAEFNLVYDRGTLFGLQSGGRTESILMSLPPIVHWE. Substrate is bound at residue 266–268; the sequence is GGR.

The protein belongs to the aerobic coproporphyrinogen-III oxidase family. Homodimer. A divalent metal cation serves as cofactor.

It localises to the cytoplasm. It carries out the reaction coproporphyrinogen III + O2 + 2 H(+) = protoporphyrinogen IX + 2 CO2 + 2 H2O. It participates in porphyrin-containing compound metabolism; protoporphyrin-IX biosynthesis; protoporphyrinogen-IX from coproporphyrinogen-III (O2 route): step 1/1. Functionally, involved in the heme biosynthesis. Catalyzes the aerobic oxidative decarboxylation of propionate groups of rings A and B of coproporphyrinogen-III to yield the vinyl groups in protoporphyrinogen-IX. The protein is Oxygen-dependent coproporphyrinogen-III oxidase of Legionella pneumophila (strain Corby).